The following is a 724-amino-acid chain: Palmitoyltransferase AKR1 (724 aa).

Topologically, residues 1 to 308 (MSGQLNVAED…HAKMVTFFTP (308 aa)) are cytoplasmic. ANK repeat units lie at residues 54–84 (PTLVKYHAACQRGDLKTVKDMIEAGVIDVKA), 90–119 (EQVSGLHWASANNRLNLVRYLIAQGADVNI), 124–153 (LEATPLHWASKSGYVYIVHCLLEHGADPLI), 157–187 (QGYNLLHTSTFSSEVMLITYVLFTGQIPVDS), 191–220 (TGKTALHWAAYQGDPNTVEALLKFDADVRV), and 224–253 (GGFTPLHWATVKGHPHVLKALIEHGSDVFL). Residues 309–329 (WLILGLILSFFAYFSILLAIL) form a helical membrane-spanning segment. The Lumenal segment spans residues 330-331 (GC). A helical transmembrane segment spans residues 332–352 (LLTVLAAGYGLYNFVFPSFIL). The Cytoplasmic portion of the chain corresponds to 353 to 360 (MKRIVIFK). A helical membrane pass occupies residues 361–381 (TPLLAGILSGTIFWLLYVWLF). Residues 382–392 (KMLPATFDDEP) are Lumenal-facing. Residues 393-413 (ILNLTVFALFAGVVFLLTKLL) traverse the membrane as a helical segment. The Cytoplasmic segment spans residues 414–489 (QSDPGYIVPA…YNYIGFRNHK (76 aa)). The DHHC domain maps to 446–496 (HFCIHSWIRLPLRAKYKRFVHSVILRYDHYCPWIYNYIGFRNHKIFIYFIL). Residue Cys476 is the S-palmitoyl cysteine intermediate of the active site. The chain crosses the membrane as a helical span at residues 490–510 (IFIYFILLLDLGILALAKLCL). The Lumenal segment spans residues 511 to 543 (EYFDELKDHAKNKDALKCSILSKDLCAGFTYDP). The chain crosses the membrane as a helical span at residues 544-564 (FTLFLLEWVCVQGMWILALSF). The Cytoplasmic segment spans residues 565-724 (VQFFECLKGV…ERVISIEEIV (160 aa)).

This sequence belongs to the DHHC palmitoyltransferase family. AKR/ZDHHC17 subfamily.

The protein resides in the early endosome membrane. It is found in the golgi apparatus membrane. It catalyses the reaction L-cysteinyl-[protein] + hexadecanoyl-CoA = S-hexadecanoyl-L-cysteinyl-[protein] + CoA. Functionally, palmitoyltransferase specific for casein kinase 1. The sequence is that of Palmitoyltransferase AKR1 (AKR1) from Eremothecium gossypii (strain ATCC 10895 / CBS 109.51 / FGSC 9923 / NRRL Y-1056) (Yeast).